A 227-amino-acid chain; its full sequence is MALSIFKDLPAEHPRHLIPSLCRQFYHLGWVTGTGGGMSIKYNDEIYIAPSGVQKERMQPEDLFVQDITGKDLQLPPEIKGLKKSQCTPLFMLAYQHRQAGAVIHTHSQHAVMATLLWPGKTFRCTHLEMIKGVYDEADKRYLRYDEELVVPIIENTPFERDLADSMYAAMMEYPGCSAILVRRHGVYVWGQNWEKAKTMSECYDYLFSIAVEMKKAGIDPEKFESS.

C87 lines the substrate pocket. Residues H105 and H107 each contribute to the Zn(2+) site. E129 functions as the Proton donor/acceptor in the catalytic mechanism. Position 185 (H185) interacts with Zn(2+).

It belongs to the aldolase class II family. MtnB subfamily. Zn(2+) serves as cofactor.

The protein resides in the cytoplasm. The catalysed reaction is 5-(methylsulfanyl)-D-ribulose 1-phosphate = 5-methylsulfanyl-2,3-dioxopentyl phosphate + H2O. Its pathway is amino-acid biosynthesis; L-methionine biosynthesis via salvage pathway; L-methionine from S-methyl-5-thio-alpha-D-ribose 1-phosphate: step 2/6. Functionally, catalyzes the dehydration of methylthioribulose-1-phosphate (MTRu-1-P) into 2,3-diketo-5-methylthiopentyl-1-phosphate (DK-MTP-1-P). The sequence is that of Probable methylthioribulose-1-phosphate dehydratase from Drosophila melanogaster (Fruit fly).